An 884-amino-acid polypeptide reads, in one-letter code: Protein argonaute-4 (884 aa).

One can recognise a PAZ domain in the interval 242 to 361 (PVIEFMCEVL…LPLEVCNIVA (120 aa)). Positions 532-843 (LIVVILPGKT…VAFRARYHLV (312 aa)) constitute a Piwi domain. The disordered stretch occupies residues 848–870 (DSAEGSHVSGQSNGRDPQALAKA).

It belongs to the argonaute family. Ago subfamily.

It localises to the cytoplasm. The protein resides in the P-body. Required for RNA-mediated gene silencing (RNAi). Binds to short RNAs such as microRNAs (miRNAs) and represses the translation of mRNAs which are complementary to them. Lacks endonuclease activity and does not appear to cleave target mRNAs. This chain is Protein argonaute-4 (ago4), found in Xenopus laevis (African clawed frog).